The sequence spans 953 residues: MSLNRFLFTSFSFFLFFIVHFASSATLPTQEGEAFKVVLTTLKKTNIDLNVDPCEVSSTGNEWSTISRNLKRENLQGSLPKELVGLPLLQEIDLSRNYLNGSIPPEWGVLPLVNIWLLGNRLTGPIPKEFGNITTLTSLVLEANQLSGELPLELGNLPNIQQMILSSNNFNGEIPSTFAKLTTLRDFRVSDNQLSGTIPDFIQKWTKLERLFIQASGLVGPIPIAIASLVELKDLRISDLNGPESPFPQLRNIKKMETLILRNCNLTGDLPDYLGKITSFKFLDLSFNKLSGAIPNTYINLRDGGYIYFTGNMLNGSVPDWMVNKGYKIDLSYNNFSVDPTNAVCKYNNVLSCMRNYQCPKTFNALHINCGGDEMSINGTIYESDKYDRLESWYESRNGWFSNNVGVFVDDKHVPERVTIESNSSELNVVDFGLYTQARISAISLTYYALCLENGNYNVNLHFAEIMFNGNNNYQSLGRRFFDIYIQRKLEVKDFNIAKEAKDVGNVVIKTFPVEIKDGKLEIRLYWAGRGTTVIPKERVYGPLISAISVDSSVNPSPRNGMSTGTLHTLVVILSIFIVFLVFGTLWKKGYLRSKSQMEKDFKSLELMIASFSLRQIKIATNNFDSANRIGEGGFGPVYKGKLFDGTIIAVKQLSTGSKQGNREFLNEIGMISALHHPNLVKLYGCCVEGGQLLLVYEFVENNSLARALFGPQETQLRLDWPTRRKICIGVARGLAYLHEESRLKIVHRDIKATNVLLDKQLNPKISDFGLAKLDEEDSTHISTRIAGTFGYMAPEYAMRGHLTDKADVYSFGIVALEIVHGRSNKIERSKNNTFYLIDWVEVLREKNNLLELVDPRLGSEYNREEAMTMIQIAIMCTSSEPCERPSMSEVVKMLEGKKMVEVEKLEEASVHRETKRLENMNTMKKYYEMIGQEISTSMSMIMSDRSESSADH.

An N-terminal signal peptide occupies residues 1-22; sequence MSLNRFLFTSFSFFLFFIVHFA. The Extracellular segment spans residues 23–566; that stretch reads SSATLPTQEG…SPRNGMSTGT (544 aa). 6 LRR repeats span residues 63 to 86, 88 to 110, 111 to 132, 135 to 158, 159 to 182, and 183 to 205; these read WSTI…LVGL, LLQE…WGVL, PLVN…EFGN, TLTS…GNLP, NIQQ…AKLT, and TLRD…IQKW. Asparagine 100 and asparagine 132 each carry an N-linked (GlcNAc...) asparagine glycan. Asparagine 265, asparagine 315, asparagine 335, asparagine 378, and asparagine 423 each carry an N-linked (GlcNAc...) asparagine glycan. Residues 567–587 form a helical membrane-spanning segment; that stretch reads LHTLVVILSIFIVFLVFGTLW. Topologically, residues 588–953 are cytoplasmic; sequence KKGYLRSKSQ…SDRSESSADH (366 aa). In terms of domain architecture, Protein kinase spans 624–901; it reads FDSANRIGEG…VKMLEGKKMV (278 aa). Residues 630-638 and lysine 652 each bind ATP; that span reads IGEGGFGPV. A Phosphotyrosine modification is found at tyrosine 697. Aspartate 750 functions as the Proton acceptor in the catalytic mechanism. Serine 783 bears the Phosphoserine mark. Threonine 784 and threonine 789 each carry phosphothreonine. Tyrosine 797 bears the Phosphotyrosine mark.

Belongs to the protein kinase superfamily. Ser/Thr protein kinase family.

It is found in the membrane. It catalyses the reaction L-seryl-[protein] + ATP = O-phospho-L-seryl-[protein] + ADP + H(+). The catalysed reaction is L-threonyl-[protein] + ATP = O-phospho-L-threonyl-[protein] + ADP + H(+). This is Probable LRR receptor-like serine/threonine-protein kinase At1g53420 from Arabidopsis thaliana (Mouse-ear cress).